A 253-amino-acid polypeptide reads, in one-letter code: Acidic 26 kDa endochitinase (253 aa).

The N-terminal stretch at 1–24 (MKFNIVSPVALSCLFFLFLTGTLA) is a signal peptide. E92 functions as the Proton donor in the catalytic mechanism. C212 and C244 are joined by a disulfide.

This sequence belongs to the glycosyl hydrolase 19 family. Chitinase class II subfamily.

The protein resides in the secreted. It localises to the extracellular space. It catalyses the reaction Random endo-hydrolysis of N-acetyl-beta-D-glucosaminide (1-&gt;4)-beta-linkages in chitin and chitodextrins.. In terms of biological role, defense against chitin-containing fungal pathogens. This chain is Acidic 26 kDa endochitinase (CHI3), found in Solanum lycopersicum (Tomato).